Here is a 2512-residue protein sequence, read N- to C-terminus: Fatty acid synthase (2512 aa).

N-acetylglutamate is present on Glu2. Residues 2–406 (EDVVIAGIAG…GSNAHVILRP (405 aa)) form the Ketosynthase family 3 (KS3) domain. Catalysis depends on for beta-ketoacyl synthase activity residues Cys161, His293, and His331. The tract at residues 427–815 (GRTQEAVEIL…GINVLGNNLF (389 aa)) is acyl and malonyl transferases. The active-site For acyl/malonyl transferase activity is Ser580. Residues 646-647 (DT), Phe670, and Arg772 contribute to the an acyl-CoA site. Residues 844-967 (PKAEDFPSGS…ISLLENDALK (124 aa)) form an N-terminal hotdog fold region. Positions 844–1111 (PKAEDFPSGS…ASVAPRRQQE (268 aa)) constitute a PKS/mFAS DH domain. His878 acts as the Proton acceptor; for dehydratase activity in catalysis. The C-terminal hotdog fold stretch occupies residues 984-1111 (AKSGLLMEDV…ASVAPRRQQE (128 aa)). Asp1034 acts as the Proton donor; for dehydratase activity in catalysis. Cys1475 carries the S-nitrosocysteine modification. Residues 1638 to 1866 (WEVPENWTLE…MIKIQEEEKQ (229 aa)) form an enoyl reductase region. Residue 1675–1692 (VLIHSGSGGVGQAAIAIA) coordinates NADP(+). N6-(pyridoxal phosphate)lysine is present on Lys1708. The tract at residues 1867-2119 (YPLRSEPVKL…SFVLAEKVSV (253 aa)) is beta-ketoacyl reductase. NADP(+) is bound at residue 1889-1904 (SYIITGGLGGFGLELA). Cys2093 is modified (S-nitrosocysteine). The Carrier domain maps to 2120–2200 (KSEGGSQRDL…ELSSKTGTAE (81 aa)). Ser2158 bears the O-(pantetheine 4'-phosphoryl)serine mark. Positions 2209–2511 (KTGPGEPPKL…LAEPRVSVRE (303 aa)) are thioesterase. Residues Ser2309 and His2482 each act as for thioesterase activity in the active site.

As to quaternary structure, homodimer which is arranged in a head to tail fashion. Post-translationally, S-nitrosylation of Fatty acid synthase at cysteine residues Cys-1475 or Cys-2093 is important for the enzyme dimerization. In adipocytes, S-nitrosylation of Fatty acid synthase occurs under physiological conditions and gradually increases during adipogenesis.

The catalysed reaction is acetyl-CoA + n malonyl-CoA + 2n NADPH + 2n H(+) = a long-chain fatty acid + (n+1) CoA + n CO2 + 2n NADP(+).. It catalyses the reaction holo-[ACP] + acetyl-CoA = acetyl-[ACP] + CoA. It carries out the reaction holo-[ACP] + malonyl-CoA = malonyl-[ACP] + CoA. The enzyme catalyses a fatty acyl-[ACP] + malonyl-[ACP] + H(+) = a 3-oxoacyl-[ACP] + holo-[ACP] + CO2. The catalysed reaction is a (3R)-hydroxyacyl-[ACP] + NADP(+) = a 3-oxoacyl-[ACP] + NADPH + H(+). It catalyses the reaction a (3R)-hydroxyacyl-[ACP] = a (2E)-enoyl-[ACP] + H2O. It carries out the reaction a 2,3-saturated acyl-[ACP] + NADP(+) = a (2E)-enoyl-[ACP] + NADPH + H(+). The enzyme catalyses hexadecanoyl-[ACP] + H2O = hexadecanoate + holo-[ACP] + H(+). The catalysed reaction is acetyl-[ACP] + malonyl-[ACP] + H(+) = 3-oxobutanoyl-[ACP] + holo-[ACP] + CO2. It catalyses the reaction 3-oxobutanoyl-[ACP] + NADPH + H(+) = (3R)-hydroxybutanoyl-[ACP] + NADP(+). It carries out the reaction (3R)-hydroxybutanoyl-[ACP] = (2E)-butenoyl-[ACP] + H2O. The enzyme catalyses (2E)-butenoyl-[ACP] + NADPH + H(+) = butanoyl-[ACP] + NADP(+). The catalysed reaction is butanoyl-[ACP] + malonyl-[ACP] + H(+) = 3-oxohexanoyl-[ACP] + holo-[ACP] + CO2. It catalyses the reaction 3-oxohexanoyl-[ACP] + NADPH + H(+) = (3R)-hydroxyhexanoyl-[ACP] + NADP(+). It carries out the reaction (3R)-hydroxyhexanoyl-[ACP] = (2E)-hexenoyl-[ACP] + H2O. The enzyme catalyses (2E)-hexenoyl-[ACP] + NADPH + H(+) = hexanoyl-[ACP] + NADP(+). The catalysed reaction is hexanoyl-[ACP] + malonyl-[ACP] + H(+) = 3-oxooctanoyl-[ACP] + holo-[ACP] + CO2. It catalyses the reaction 3-oxooctanoyl-[ACP] + NADPH + H(+) = (3R)-hydroxyoctanoyl-[ACP] + NADP(+). It carries out the reaction (3R)-hydroxyoctanoyl-[ACP] = (2E)-octenoyl-[ACP] + H2O. The enzyme catalyses (2E)-octenoyl-[ACP] + NADPH + H(+) = octanoyl-[ACP] + NADP(+). The catalysed reaction is octanoyl-[ACP] + malonyl-[ACP] + H(+) = 3-oxodecanoyl-[ACP] + holo-[ACP] + CO2. It catalyses the reaction 3-oxodecanoyl-[ACP] + NADPH + H(+) = (3R)-hydroxydecanoyl-[ACP] + NADP(+). It carries out the reaction (3R)-hydroxydecanoyl-[ACP] = (2E)-decenoyl-[ACP] + H2O. The enzyme catalyses (2E)-decenoyl-[ACP] + NADPH + H(+) = decanoyl-[ACP] + NADP(+). The catalysed reaction is decanoyl-[ACP] + malonyl-[ACP] + H(+) = 3-oxododecanoyl-[ACP] + holo-[ACP] + CO2. It catalyses the reaction 3-oxododecanoyl-[ACP] + NADPH + H(+) = (3R)-hydroxydodecanoyl-[ACP] + NADP(+). It carries out the reaction (3R)-hydroxydodecanoyl-[ACP] = (2E)-dodecenoyl-[ACP] + H2O. The enzyme catalyses (2E)-dodecenoyl-[ACP] + NADPH + H(+) = dodecanoyl-[ACP] + NADP(+). The catalysed reaction is dodecanoyl-[ACP] + malonyl-[ACP] + H(+) = 3-oxotetradecanoyl-[ACP] + holo-[ACP] + CO2. It catalyses the reaction 3-oxotetradecanoyl-[ACP] + NADPH + H(+) = (3R)-hydroxytetradecanoyl-[ACP] + NADP(+). It carries out the reaction (3R)-hydroxytetradecanoyl-[ACP] = (2E)-tetradecenoyl-[ACP] + H2O. The enzyme catalyses (2E)-tetradecenoyl-[ACP] + NADPH + H(+) = tetradecanoyl-[ACP] + NADP(+). The catalysed reaction is tetradecanoyl-[ACP] + malonyl-[ACP] + H(+) = 3-oxohexadecanoyl-[ACP] + holo-[ACP] + CO2. It catalyses the reaction 3-oxohexadecanoyl-[ACP] + NADPH + H(+) = (3R)-hydroxyhexadecanoyl-[ACP] + NADP(+). It carries out the reaction (3R)-hydroxyhexadecanoyl-[ACP] = (2E)-hexadecenoyl-[ACP] + H2O. The enzyme catalyses (2E)-hexadecenoyl-[ACP] + NADPH + H(+) = hexadecanoyl-[ACP] + NADP(+). The catalysed reaction is hexadecanoyl-[ACP] + malonyl-[ACP] + H(+) = 3-oxooctadecanoyl-[ACP] + holo-[ACP] + CO2. It catalyses the reaction 3-oxooctadecanoyl-[ACP] + NADPH + H(+) = (3R)-hydroxyoctadecanoyl-[ACP] + NADP(+). It carries out the reaction (3R)-hydroxyoctadecanoyl-[ACP] = (2E)-octadecenoyl-[ACP] + H2O. The enzyme catalyses (2E)-octadecenoyl-[ACP] + NADPH + H(+) = octadecanoyl-[ACP] + NADP(+). The catalysed reaction is tetradecanoyl-[ACP] + H2O = tetradecanoate + holo-[ACP] + H(+). It catalyses the reaction octadecanoyl-[ACP] + H2O = octadecanoate + holo-[ACP] + H(+). It functions in the pathway lipid metabolism; fatty acid biosynthesis. Cerulenin, a potent non-competitive pharmacological inhibitor of FAS, binds covalently to the active site of the condensing enzyme region, inactivating a key enzyme step in fatty acid synthesis. In terms of biological role, fatty acid synthetase is a multifunctional enzyme that catalyzes the de novo biosynthesis of long-chain saturated fatty acids starting from acetyl-CoA and malonyl-CoA in the presence of NADPH. This multifunctional protein contains 7 catalytic activities and a site for the binding of the prosthetic group 4'-phosphopantetheine of the acyl carrier protein ([ACP]) domain. The chain is Fatty acid synthase (FASN) from Gallus gallus (Chicken).